We begin with the raw amino-acid sequence, 194 residues long: Imidazoleglycerol-phosphate dehydratase (194 aa).

It belongs to the imidazoleglycerol-phosphate dehydratase family.

It localises to the cytoplasm. It catalyses the reaction D-erythro-1-(imidazol-4-yl)glycerol 3-phosphate = 3-(imidazol-4-yl)-2-oxopropyl phosphate + H2O. It functions in the pathway amino-acid biosynthesis; L-histidine biosynthesis; L-histidine from 5-phospho-alpha-D-ribose 1-diphosphate: step 6/9. The sequence is that of Imidazoleglycerol-phosphate dehydratase from Bacillus anthracis (strain A0248).